We begin with the raw amino-acid sequence, 396 residues long: Flavohemoprotein (396 aa).

One can recognise a Globin domain in the interval M1–E136. Heme b is bound at residue H85. Catalysis depends on charge relay system residues Y95 and E135. The interval G147 to I396 is reductase. The region spanning R150 to D255 is the FAD-binding FR-type domain. FAD-binding positions include Y188 and R204–S207. Residue G268–P273 participates in NADP(+) binding. C389–P392 is a binding site for FAD.

Belongs to the globin family. Two-domain flavohemoproteins subfamily. This sequence in the C-terminal section; belongs to the flavoprotein pyridine nucleotide cytochrome reductase family. Requires heme b as cofactor. FAD is required as a cofactor.

It carries out the reaction 2 nitric oxide + NADPH + 2 O2 = 2 nitrate + NADP(+) + H(+). The catalysed reaction is 2 nitric oxide + NADH + 2 O2 = 2 nitrate + NAD(+) + H(+). Is involved in NO detoxification in an aerobic process, termed nitric oxide dioxygenase (NOD) reaction that utilizes O(2) and NAD(P)H to convert NO to nitrate, which protects the bacterium from various noxious nitrogen compounds. Therefore, plays a central role in the inducible response to nitrosative stress. This chain is Flavohemoprotein, found in Photorhabdus laumondii subsp. laumondii (strain DSM 15139 / CIP 105565 / TT01) (Photorhabdus luminescens subsp. laumondii).